Reading from the N-terminus, the 693-residue chain is Elongation factor G (693 aa).

The tr-type G domain occupies 7 to 282; the sequence is EKIRNIGITA…SVIDYLPAPT (276 aa). Residues 16–23, 80–84, and 134–137 contribute to the GTP site; these read AHIDAGKT, DTPGH, and NKLD.

The protein belongs to the TRAFAC class translation factor GTPase superfamily. Classic translation factor GTPase family. EF-G/EF-2 subfamily.

The protein resides in the cytoplasm. In terms of biological role, catalyzes the GTP-dependent ribosomal translocation step during translation elongation. During this step, the ribosome changes from the pre-translocational (PRE) to the post-translocational (POST) state as the newly formed A-site-bound peptidyl-tRNA and P-site-bound deacylated tRNA move to the P and E sites, respectively. Catalyzes the coordinated movement of the two tRNA molecules, the mRNA and conformational changes in the ribosome. The polypeptide is Elongation factor G (Granulibacter bethesdensis (strain ATCC BAA-1260 / CGDNIH1)).